Reading from the N-terminus, the 98-residue chain is Large ribosomal subunit protein uL23 (98 aa).

The protein belongs to the universal ribosomal protein uL23 family. Part of the 50S ribosomal subunit. Contacts protein L29, and trigger factor when it is bound to the ribosome.

In terms of biological role, one of the early assembly proteins it binds 23S rRNA. One of the proteins that surrounds the polypeptide exit tunnel on the outside of the ribosome. Forms the main docking site for trigger factor binding to the ribosome. In Methylobacterium nodulans (strain LMG 21967 / CNCM I-2342 / ORS 2060), this protein is Large ribosomal subunit protein uL23.